Here is a 533-residue protein sequence, read N- to C-terminus: Probable protein kinase UbiB (533 aa).

Residues 24 to 44 (LILELPMLPWWLRLLGATLPW) form a helical membrane-spanning segment. The 369-residue stretch at 126–494 (RFEREPLASA…WKGSRHDWLG (369 aa)) folds into the Protein kinase domain. ATP contacts are provided by residues 132–140 (LASASVAQV) and lysine 154. Aspartate 289 serves as the catalytic Proton acceptor. The helical transmembrane segment at 510–530 (LGQQLEAWPAWVMLAGGVFLI) threads the bilayer.

The protein belongs to the ABC1 family. UbiB subfamily.

The protein localises to the cell inner membrane. It functions in the pathway cofactor biosynthesis; ubiquinone biosynthesis [regulation]. Functionally, is probably a protein kinase regulator of UbiI activity which is involved in aerobic coenzyme Q (ubiquinone) biosynthesis. The polypeptide is Probable protein kinase UbiB (Pseudomonas aeruginosa (strain ATCC 15692 / DSM 22644 / CIP 104116 / JCM 14847 / LMG 12228 / 1C / PRS 101 / PAO1)).